A 262-amino-acid polypeptide reads, in one-letter code: Hemin import ATP-binding protein HmuV (262 aa).

An ABC transporter domain is found at 3-244; that stretch reads LQARNLTLAR…DHMRRVYGIE (242 aa). Position 35 to 42 (35 to 42) interacts with ATP; that stretch reads GANGAGKS.

It belongs to the ABC transporter superfamily. Heme (hemin) importer (TC 3.A.1.14.5) family. As to quaternary structure, the complex is composed of two ATP-binding proteins (HmuV), two transmembrane proteins (HmuU) and a solute-binding protein (HmuT).

It is found in the cell inner membrane. Functionally, part of the ABC transporter complex HmuTUV involved in hemin import. Responsible for energy coupling to the transport system. In Bordetella parapertussis (strain 12822 / ATCC BAA-587 / NCTC 13253), this protein is Hemin import ATP-binding protein HmuV.